A 319-amino-acid chain; its full sequence is MVTDGASPRSGVSLIIGRPSSGKSTFLNAVCGYKVSIVSPIPQTTRNTVRGIVNIESDQIVFMDTPGYHRSDRKFNLRLQSLVHSNVKDADVLLYLVDATRQFGEEEAAICALLAPYQKTRVLLAFNKVDVLHNSTSCDEHAFLHRQGSVLRAGSLGRALHAALPHLPADRVFTISALHQVGLDALMRTLRDLLPEAAPLYPQDCYTDQTIAFRVTELIREQAIARCRDELPHALYAGVEDMELRRGKRELWCRAFLAVERESQKAVLVGKKGAVIRAIRLDAIRALRTLLPYHISLDIRVKVDRSWRQRDHTLSSLLY.

Residues 9-196 (RSGVSLIIGR…MRTLRDLLPE (188 aa)) enclose the Era-type G domain. The G1 stretch occupies residues 17-24 (GRPSSGKS). Position 17–24 (17–24 (GRPSSGKS)) interacts with GTP. Residues 43–47 (QTTRN) are G2. Positions 64-67 (DTPG) are G3. GTP is bound by residues 64-68 (DTPGY) and 127-130 (NKVD). Residues 127 to 130 (NKVD) are G4. The segment at 175-177 (ISA) is G5. A KH type-2 domain is found at 227–303 (CRDELPHALY…HISLDIRVKV (77 aa)).

It belongs to the TRAFAC class TrmE-Era-EngA-EngB-Septin-like GTPase superfamily. Era GTPase family. As to quaternary structure, monomer.

The protein resides in the cytoplasm. It localises to the cell inner membrane. Its function is as follows. An essential GTPase that binds both GDP and GTP, with rapid nucleotide exchange. Plays a role in 16S rRNA processing and 30S ribosomal subunit biogenesis and possibly also in cell cycle regulation and energy metabolism. This Treponema pallidum (strain Nichols) protein is GTPase Era.